Here is a 154-residue protein sequence, read N- to C-terminus: UPF0039 protein sll0451 (154 aa).

The N-acetyltransferase domain maps to 8 to 151; sequence QRFNDISGEA…EHISMIFRVP (144 aa).

It belongs to the UPF0039 (ElaA) family.

The protein is UPF0039 protein sll0451 of Synechocystis sp. (strain ATCC 27184 / PCC 6803 / Kazusa).